The following is a 156-amino-acid chain: SsrA-binding protein (156 aa).

The interval 134-156 is disordered; that stretch reads YDKRETLKRKEQDREMARALRKR.

Belongs to the SmpB family.

The protein resides in the cytoplasm. Its function is as follows. Required for rescue of stalled ribosomes mediated by trans-translation. Binds to transfer-messenger RNA (tmRNA), required for stable association of tmRNA with ribosomes. tmRNA and SmpB together mimic tRNA shape, replacing the anticodon stem-loop with SmpB. tmRNA is encoded by the ssrA gene; the 2 termini fold to resemble tRNA(Ala) and it encodes a 'tag peptide', a short internal open reading frame. During trans-translation Ala-aminoacylated tmRNA acts like a tRNA, entering the A-site of stalled ribosomes, displacing the stalled mRNA. The ribosome then switches to translate the ORF on the tmRNA; the nascent peptide is terminated with the 'tag peptide' encoded by the tmRNA and targeted for degradation. The ribosome is freed to recommence translation, which seems to be the essential function of trans-translation. This chain is SsrA-binding protein, found in Latilactobacillus sakei subsp. sakei (strain 23K) (Lactobacillus sakei subsp. sakei).